Consider the following 88-residue polypeptide: Small ribosomal subunit protein bS20 (88 aa).

A disordered region spans residues 69–88; the sequence is KNTASRKKSRLTKRFNKLTG. A compositionally biased stretch (basic residues) spans 71–88; that stretch reads TASRKKSRLTKRFNKLTG.

It belongs to the bacterial ribosomal protein bS20 family.

Binds directly to 16S ribosomal RNA. This chain is Small ribosomal subunit protein bS20, found in Pelotomaculum thermopropionicum (strain DSM 13744 / JCM 10971 / SI).